Reading from the N-terminus, the 291-residue chain is MRYLSKDILEEVITQRPSDSYKSNFGRVVLIGGNRQYGGAIIMSTEACINSGAGLTTVITDVKNHGPLHARCPEAMVVGFEETVLLTNVVEQADVILIGPGLGLDATAQQILKMVLAQHQKQQWLIIDGSAITLFSQGNFSLTYPEKVVFTPHQMEWQRLSHLPIEQQTLANNQRQQAKLGSTIVLKSHRTTIFHAGEPFQNTGGNPGMATGGTGDTLAGIIAGFLAQFKPTIETIAGAVYLHSLIGDDLAKTDYVVLPTKISQALPTYMKKYAQPHTAPDSELLEQKRSR.

Residues 5 to 273 (SKDILEEVIT…QALPTYMKKY (269 aa)) enclose the YjeF C-terminal domain. The (6S)-NADPHX site is built by alanine 40, glycine 103, and histidine 153. AMP is bound at residue glycine 215. Aspartate 216 is a (6S)-NADPHX binding site.

Belongs to the NnrD/CARKD family. Homotetramer. Requires Mg(2+) as cofactor.

The enzyme catalyses (6S)-NADHX + ADP = AMP + phosphate + NADH + H(+). It catalyses the reaction (6S)-NADPHX + ADP = AMP + phosphate + NADPH + H(+). Its function is as follows. Catalyzes the dehydration of the S-form of NAD(P)HX at the expense of ADP, which is converted to AMP. Together with NAD(P)HX epimerase, which catalyzes the epimerization of the S- and R-forms, the enzyme allows the repair of both epimers of NAD(P)HX, a damaged form of NAD(P)H that is a result of enzymatic or heat-dependent hydration. The chain is ADP-dependent (S)-NAD(P)H-hydrate dehydratase from Enterococcus faecalis (strain ATCC 700802 / V583).